The sequence spans 529 residues: Peptide chain release factor 3 (529 aa).

Residues 11–280 (SKRRTFAIIS…GLTDWAPAPL (270 aa)) form the tr-type G domain. GTP-binding positions include 20 to 27 (SHPDAGKT), 88 to 92 (DTPGH), and 142 to 145 (NKLD).

The protein belongs to the TRAFAC class translation factor GTPase superfamily. Classic translation factor GTPase family. PrfC subfamily.

Its subcellular location is the cytoplasm. In terms of biological role, increases the formation of ribosomal termination complexes and stimulates activities of RF-1 and RF-2. It binds guanine nucleotides and has strong preference for UGA stop codons. It may interact directly with the ribosome. The stimulation of RF-1 and RF-2 is significantly reduced by GTP and GDP, but not by GMP. The sequence is that of Peptide chain release factor 3 from Vibrio vulnificus (strain YJ016).